Reading from the N-terminus, the 488-residue chain is Ribulose bisphosphate carboxylase large chain (488 aa).

Substrate contacts are provided by asparagine 128 and threonine 178. Lysine 180 serves as the catalytic Proton acceptor. Substrate is bound at residue lysine 182. Residues lysine 206, aspartate 208, and glutamate 209 each coordinate Mg(2+). N6-carboxylysine is present on lysine 206. The active-site Proton acceptor is histidine 298. Substrate-binding residues include arginine 299, histidine 331, and serine 383.

It belongs to the RuBisCO large chain family. Type I subfamily. As to quaternary structure, heterohexadecamer of 8 large chains and 8 small chains. Requires Mg(2+) as cofactor.

It carries out the reaction 2 (2R)-3-phosphoglycerate + 2 H(+) = D-ribulose 1,5-bisphosphate + CO2 + H2O. The catalysed reaction is D-ribulose 1,5-bisphosphate + O2 = 2-phosphoglycolate + (2R)-3-phosphoglycerate + 2 H(+). In terms of biological role, ruBisCO catalyzes two reactions: the carboxylation of D-ribulose 1,5-bisphosphate, the primary event in carbon dioxide fixation, as well as the oxidative fragmentation of the pentose substrate. Both reactions occur simultaneously and in competition at the same active site. In Xanthobacter flavus, this protein is Ribulose bisphosphate carboxylase large chain.